Consider the following 126-residue polypeptide: UPF0538 protein C2orf76 homolog (126 aa).

Belongs to the UPF0538 family.

The sequence is that of UPF0538 protein C2orf76 homolog from Mus musculus (Mouse).